The primary structure comprises 1905 residues: Bromodomain adjacent to zinc finger domain protein 2A (1905 aa).

Disordered stretches follow at residues Met-1–Ser-59 and Thr-362–Ser-434. Composition is skewed to polar residues over residues Thr-35–Ser-59, Leu-379–Asp-391, and Thr-399–Gln-420. Thr-507 is modified (phosphothreonine). Ser-509 is subject to Phosphoserine. One can recognise an MBD domain in the interval Ile-546–Pro-617. At Thr-548 the chain carries Phosphothreonine. Phosphoserine is present on Ser-613. The disordered stretch occupies residues Ile-648–Lys-792. DNA-binding regions (a.T hook) lie at residues Thr-649 to Ala-661 and Lys-670 to Thr-682. Residues Arg-656–Lys-668 are compositionally biased toward basic and acidic residues. The span at Val-669 to Lys-678 shows a compositional bias: basic residues. An N6-acetyllysine; by KAT8 modification is found at Lys-680. A compositionally biased stretch (basic and acidic residues) spans Asn-686–Lys-709. Residues Leu-693 to Lys-792 are a coiled coil. Basic residues predominate over residues Ile-710 to Val-721. Polar residues predominate over residues Glu-725–Ala-734. Basic and acidic residues-rich tracts occupy residues Lys-739–Lys-748 and Ala-756–Lys-792. Residue Lys-799 is modified to N6-acetyllysine. The DDT domain maps to Ser-848–Phe-913. A Glycyl lysine isopeptide (Lys-Gly) (interchain with G-Cter in SUMO2) cross-link involves residue Lys-866. Residue Ser-1051 is modified to Phosphoserine. Residues Lys-1150 and Lys-1172 each participate in a glycyl lysine isopeptide (Lys-Gly) (interchain with G-Cter in SUMO2) cross-link. Disordered stretches follow at residues Ser-1178–Gln-1220, Leu-1283–Asp-1318, and Met-1330–Ser-1412. Ser-1184 carries the phosphoserine modification. Positions Ala-1186–Gly-1198 form a DNA-binding region, a.T hook 3. Residues Leu-1283 to Ser-1293 show a composition bias toward low complexity. Residues Glu-1306–Ser-1315 are compositionally biased toward acidic residues. Polar residues predominate over residues Asp-1345–Pro-1359. At Ser-1397 the chain carries Phosphoserine. A DNA-binding region (a.T hook 4) is located at residues Pro-1404–Lys-1416. The residue at position 1559 (Ser-1559) is a Phosphoserine. Residues Lys-1676 and Lys-1709 each participate in a glycyl lysine isopeptide (Lys-Gly) (interchain with G-Cter in SUMO2) cross-link. The PHD-type zinc-finger motif lies at Lys-1676–Gln-1726. Disordered regions lie at residues Gln-1734–Glu-1755 and Glu-1769–Arg-1789. Ser-1747, Ser-1770, Ser-1783, and Ser-1785 each carry phosphoserine. Positions Arg-1793 to Phe-1897 constitute a Bromo domain.

The protein belongs to the WAL family. Component of the NoRC-1 ISWI chromatin remodeling complex at least composed of SMARCA1 and BAZ2A/TIP5, which regulates the spacing of histone octamers on the DNA template to facilitate access to DNA. Within the NoRC-1 ISWI chromatin remodeling complex interacts with SMARCA1; the interaction is direct. Component of the NoRC-5 ISWI chromatin remodeling complex (also called the NoRC nucleolar-remodeling complex), at least composed of SMARCA5/SNF2H and BAZ2A/TIP5, which regulates the spacing of histone octamers on the DNA template to facilitate access to DNA. Within the NoRC-5 ISWI chromatin remodeling complexes interacts with SMARCA5/SNF2H; the interaction is direct. Interacts with TTF1; the interaction is required for recruitment of the NoRC-5 ISWI chromatin remodeling complex to rDNA. Interacts with HDAC1. Interacts with SIN3A. Interacts with DNMT1 and DNM3B. Interacts with BEND3 and USP21. Post-translationally, acetylation at Lys-680 by KAT8/MOF promotes its dissociation from pRNA, affecting heterochromatin formation, nucleosome positioning and rDNA silencing. Deacetylation by SIRT1 in late S phase enhances pRNA-binding, allowing de novo DNA methylation and heterochromatin formation. Acetylation is high during S phase and declines to background levels in late S phase when the silent copies of rRNA genes are replicated. Ubiquitinated. Deubiquitinated by USP21 leading to its stabilization. Expressed at moderate levels in most tissues analyzed, including heart, brain, placenta, lung, skeletal muscle, kidney and pancreas.

The protein resides in the nucleus. It localises to the nucleolus. Its function is as follows. Regulatory subunit of the ATP-dependent NoRC-1 and NoRC-5 ISWI chromatin remodeling complexes, which form ordered nucleosome arrays on chromatin and facilitate access to DNA during DNA-templated processes such as DNA replication, transcription, and repair. Both complexes regulate the spacing of nucleosomes along the chromatin and have the ability to slide mononucleosomes to the center of a DNA template. Directly stimulates the ATPase activity of SMARCA5 in the NoRC-5 ISWI chromatin remodeling complex. The NoRC-1 ISWI chromatin remodeling complex has a lower ATP hydrolysis rate than the NoRC-5 ISWI chromatin remodeling complex. Within the NoRC-5 ISWI chromatin remodeling complex, mediates silencing of a fraction of rDNA by recruiting histone-modifying enzymes and DNA methyltransferases, leading to heterochromatin formation and transcriptional silencing. In the complex, it plays a central role by being recruited to rDNA and by targeting chromatin modifying enzymes such as HDAC1, leading to repress RNA polymerase I transcription. Recruited to rDNA via its interaction with TTF1 and its ability to recognize and bind histone H4 acetylated on 'Lys-16' (H4K16ac), leading to deacetylation of H4K5ac, H4K8ac, H4K12ac but not H4K16ac. Specifically binds pRNAs, 150-250 nucleotide RNAs that are complementary in sequence to the rDNA promoter; pRNA-binding is required for heterochromatin formation and rDNA silencing. The chain is Bromodomain adjacent to zinc finger domain protein 2A (BAZ2A) from Homo sapiens (Human).